The sequence spans 744 residues: Protein zyg-11 homolog B (744 aa).

3 LRR repeats span residues leucine 185 to lysine 208, methionine 216 to leucine 236, and lysine 237 to glutamine 261.

The protein belongs to the zyg-11 family. Interacts with ELOC/Elongin C. Part of an E3 ubiquitin ligase complex including ZYG11B, CUL2 and Elongin BC.

Serves as substrate adapter subunit in the E3 ubiquitin ligase complex ZYG11B-CUL2-Elongin BC. Acts redudantly with ZER1 to target substrates bearing N-terminal glycine degrons for proteasomal degradation. Involved in the clearance of proteolytic fragments generated by caspase cleavage during apoptosis since N-terminal glycine degrons are strongly enriched at caspase cleavage sites. Also important in the quality control of protein N-myristoylation in which N-terminal glycine degrons are conditionally exposed after a failure of N-myristoylation. This is Protein zyg-11 homolog B from Mus musculus (Mouse).